A 447-amino-acid polypeptide reads, in one-letter code: tRNA(Ile)-lysidine synthase (447 aa).

31–36 (SGGMDS) lines the ATP pocket.

This sequence belongs to the tRNA(Ile)-lysidine synthase family.

It localises to the cytoplasm. The enzyme catalyses cytidine(34) in tRNA(Ile2) + L-lysine + ATP = lysidine(34) in tRNA(Ile2) + AMP + diphosphate + H(+). In terms of biological role, ligates lysine onto the cytidine present at position 34 of the AUA codon-specific tRNA(Ile) that contains the anticodon CAU, in an ATP-dependent manner. Cytidine is converted to lysidine, thus changing the amino acid specificity of the tRNA from methionine to isoleucine. This Pseudothermotoga lettingae (strain ATCC BAA-301 / DSM 14385 / NBRC 107922 / TMO) (Thermotoga lettingae) protein is tRNA(Ile)-lysidine synthase.